The following is a 241-amino-acid chain: Uridylate kinase (241 aa).

Residue 12-15 coordinates ATP; it reads KVSG. The involved in allosteric activation by GTP stretch occupies residues 20–25; that stretch reads GEKGTG. Glycine 54 is a binding site for UMP. ATP-binding residues include glycine 55 and arginine 59. UMP contacts are provided by residues aspartate 74 and 135-142; that span reads TGNPYFST. ATP-binding residues include asparagine 163, tyrosine 169, and aspartate 172.

Belongs to the UMP kinase family. Homohexamer.

It is found in the cytoplasm. It carries out the reaction UMP + ATP = UDP + ADP. It functions in the pathway pyrimidine metabolism; CTP biosynthesis via de novo pathway; UDP from UMP (UMPK route): step 1/1. Allosterically activated by GTP. Inhibited by UTP. In terms of biological role, catalyzes the reversible phosphorylation of UMP to UDP. In Lactobacillus johnsonii (strain CNCM I-12250 / La1 / NCC 533), this protein is Uridylate kinase.